We begin with the raw amino-acid sequence, 223 residues long: Ribosomal RNA small subunit methyltransferase G (223 aa).

S-adenosyl-L-methionine-binding positions include glycine 82, leucine 87, 133-134 (AE), and arginine 151.

This sequence belongs to the methyltransferase superfamily. RNA methyltransferase RsmG family.

The protein localises to the cytoplasm. In terms of biological role, specifically methylates the N7 position of guanine in position 518 of 16S rRNA. The sequence is that of Ribosomal RNA small subunit methyltransferase G from Corynebacterium glutamicum (strain ATCC 13032 / DSM 20300 / JCM 1318 / BCRC 11384 / CCUG 27702 / LMG 3730 / NBRC 12168 / NCIMB 10025 / NRRL B-2784 / 534).